A 242-amino-acid chain; its full sequence is Uridylate kinase (242 aa).

Residue 16-19 (KVSG) coordinates ATP. Residue glycine 58 coordinates UMP. ATP-binding residues include glycine 59 and arginine 63. UMP contacts are provided by residues aspartate 78 and 139–146 (TGNPFCTT). ATP contacts are provided by threonine 166, glutamine 167, tyrosine 172, and aspartate 175.

This sequence belongs to the UMP kinase family. In terms of assembly, homohexamer.

The protein localises to the cytoplasm. It carries out the reaction UMP + ATP = UDP + ADP. It participates in pyrimidine metabolism; CTP biosynthesis via de novo pathway; UDP from UMP (UMPK route): step 1/1. Inhibited by UTP. Its function is as follows. Catalyzes the reversible phosphorylation of UMP to UDP. This is Uridylate kinase from Rickettsia prowazekii (strain Madrid E).